We begin with the raw amino-acid sequence, 181 residues long: Shikimate kinase (181 aa).

23 to 28 (GTGKST) serves as a coordination point for ATP. S27 lines the Mg(2+) pocket. Residues D45, R69, and G91 each contribute to the substrate site. Residue R129 coordinates ATP. R148 provides a ligand contact to substrate.

It belongs to the shikimate kinase family. As to quaternary structure, monomer. The cofactor is Mg(2+).

It localises to the cytoplasm. The catalysed reaction is shikimate + ATP = 3-phosphoshikimate + ADP + H(+). It functions in the pathway metabolic intermediate biosynthesis; chorismate biosynthesis; chorismate from D-erythrose 4-phosphate and phosphoenolpyruvate: step 5/7. In terms of biological role, catalyzes the specific phosphorylation of the 3-hydroxyl group of shikimic acid using ATP as a cosubstrate. The polypeptide is Shikimate kinase (Geobacter sulfurreducens (strain ATCC 51573 / DSM 12127 / PCA)).